Consider the following 166-residue polypeptide: Protein-export protein SecB (166 aa).

The protein belongs to the SecB family. Homotetramer, a dimer of dimers. One homotetramer interacts with 1 SecA dimer.

Its subcellular location is the cytoplasm. One of the proteins required for the normal export of preproteins out of the cell cytoplasm. It is a molecular chaperone that binds to a subset of precursor proteins, maintaining them in a translocation-competent state. It also specifically binds to its receptor SecA. The polypeptide is Protein-export protein SecB (Actinobacillus pleuropneumoniae serotype 5b (strain L20)).